The following is a 125-amino-acid chain: Large ribosomal subunit protein bL12 (125 aa).

It belongs to the bacterial ribosomal protein bL12 family. Homodimer. Part of the ribosomal stalk of the 50S ribosomal subunit. Forms a multimeric L10(L12)X complex, where L10 forms an elongated spine to which 2 to 4 L12 dimers bind in a sequential fashion. Binds GTP-bound translation factors.

In terms of biological role, forms part of the ribosomal stalk which helps the ribosome interact with GTP-bound translation factors. Is thus essential for accurate translation. The protein is Large ribosomal subunit protein bL12 of Bradyrhizobium sp. (strain ORS 278).